The following is a 492-amino-acid chain: Cytochrome P450 2A12 (492 aa).

A heme-binding site is contributed by Cys-437.

It belongs to the cytochrome P450 family. Requires heme as cofactor. As to expression, liver.

It localises to the endoplasmic reticulum membrane. Its subcellular location is the microsome membrane. It carries out the reaction an organic molecule + reduced [NADPH--hemoprotein reductase] + O2 = an alcohol + oxidized [NADPH--hemoprotein reductase] + H2O + H(+). Functionally, highly active in the 7-alpha-hydroxylation of testosterone. This is Cytochrome P450 2A12 (Cyp2a12) from Mus musculus (Mouse).